The sequence spans 209 residues: Orotate phosphoribosyltransferase (209 aa).

5-phospho-alpha-D-ribose 1-diphosphate contacts are provided by residues Arg96, Lys100, His102, and Glu122–Ser130. Ser126 lines the orotate pocket.

The protein belongs to the purine/pyrimidine phosphoribosyltransferase family. PyrE subfamily. In terms of assembly, homodimer. It depends on Mg(2+) as a cofactor.

It carries out the reaction orotidine 5'-phosphate + diphosphate = orotate + 5-phospho-alpha-D-ribose 1-diphosphate. Its pathway is pyrimidine metabolism; UMP biosynthesis via de novo pathway; UMP from orotate: step 1/2. Functionally, catalyzes the transfer of a ribosyl phosphate group from 5-phosphoribose 1-diphosphate to orotate, leading to the formation of orotidine monophosphate (OMP). The chain is Orotate phosphoribosyltransferase from Streptococcus sanguinis (strain SK36).